The sequence spans 255 residues: Phosphatidylglycerol--prolipoprotein diacylglyceryl transferase (255 aa).

Transmembrane regions (helical) follow at residues 15-35 (WYGI…NLNC), 46-66 (IDVF…YYVV), and 84-104 (LGGL…YIVS). Arginine 130 is a binding site for a 1,2-diacyl-sn-glycero-3-phospho-(1'-sn-glycerol). Helical transmembrane passes span 169 to 189 (PTFL…VYIF), 196 to 216 (GTVI…IEGL), and 228 to 248 (VAQL…VYLK).

This sequence belongs to the Lgt family.

The protein localises to the cell membrane. The catalysed reaction is L-cysteinyl-[prolipoprotein] + a 1,2-diacyl-sn-glycero-3-phospho-(1'-sn-glycerol) = an S-1,2-diacyl-sn-glyceryl-L-cysteinyl-[prolipoprotein] + sn-glycerol 1-phosphate + H(+). Its pathway is protein modification; lipoprotein biosynthesis (diacylglyceryl transfer). Its function is as follows. Catalyzes the transfer of the diacylglyceryl group from phosphatidylglycerol to the sulfhydryl group of the N-terminal cysteine of a prolipoprotein, the first step in the formation of mature lipoproteins. The protein is Phosphatidylglycerol--prolipoprotein diacylglyceryl transferase of Clostridium kluyveri (strain NBRC 12016).